Reading from the N-terminus, the 1177-residue chain is Zinc finger CCCH domain-containing protein 6 (1177 aa).

Positions 1 to 12 (MTDSEHAGHDRE) are enriched in basic and acidic residues. 2 disordered regions span residues 1-137 (MTDS…SKEY) and 179-206 (QESSGSSFSKESGKKLRSKGSPPGTEYR). Residues 13–31 (DGELEDGEIDDAGFEETQD) are compositionally biased toward acidic residues. Residues 27–73 (EETQDQEAKENEKQKNEKAYRKSRKKHKKEREKKKSKRRKHEKHKHN) adopt a coiled-coil conformation. Positions 32 to 46 (QEAKENEKQKNEKAY) are enriched in basic and acidic residues. Residues 47–73 (RKSRKKHKKEREKKKSKRRKHEKHKHN) show a composition bias toward basic residues. Low complexity predominate over residues 179–188 (QESSGSSFSK). C3H1-type zinc fingers lie at residues 271–297 (KGKQICKYFLEGRCIKGDHCKFNHDAE), 299–326 (EKKKEVCKYYLQGYCTKGENCIYMHSEF), and 327–350 (PCKFYHSGAKCYQGDKCKFSHDDL). Residues 347 to 383 (HDDLTKETRKLLDKVLNADEELVNEDERELEELRKRG) adopt a coiled-coil conformation. 8 disordered regions span residues 383–416 (GITPLPKPPPGVGLLPTPSEHFPFSDPEDDFETD), 446–587 (PPAF…ESMQ), 622–654 (QQQPPIARDTAHLGSGPNSSSRMTSHCPLSASG), 670–767 (RYQE…KKPH), 780–826 (PKKL…SERE), 942–988 (EQSG…SSRS), 1043–1101 (DPRD…PVDG), and 1132–1162 (LLRPPYSDPRQAREPGQASPTPDEETDDKPL). The segment covering 493–502 (HPGSPGHHPC) has biased composition (low complexity). Polar residues-rich tracts occupy residues 512 to 522 (ENPSLLPSSSE) and 564 to 587 (SSPASLYQQMPSEMQRSADSESMQ). Positions 713 to 728 (RTLQKQTGTLRNQQLP) are enriched in polar residues. The span at 753–767 (PRLRTVPRQDIKKPH) shows a compositional bias: basic and acidic residues. Residues 955 to 967 (GDPRLQKNFDPRL) are compositionally biased toward basic and acidic residues. Composition is skewed to polar residues over residues 1050–1064 (LSATELSTISSGENT) and 1077–1093 (KNQPSPGEVTVPQNTTA). Ser1150 carries the post-translational modification Phosphoserine.

The protein is Zinc finger CCCH domain-containing protein 6 (Zc3h6) of Mus musculus (Mouse).